Here is a 468-residue protein sequence, read N- to C-terminus: Chromosomal replication initiator protein DnaA (468 aa).

The domain I, interacts with DnaA modulators stretch occupies residues 1–84 (MSSSLWLQCL…RFEVGSRRVA (84 aa)). The domain II stretch occupies residues 84–131 (AAPKPAPTRTPADVAAESSAPAQLQARKPVHKTWDDDAQVIADINHRS). Positions 85 to 95 (APKPAPTRTPA) are enriched in low complexity. Positions 85-104 (APKPAPTRTPADVAAESSAP) are disordered. The tract at residues 132-348 (NVNPKHKFNN…GALNRVIANA (217 aa)) is domain III, AAA+ region. ATP-binding residues include glycine 176, glycine 178, lysine 179, and threonine 180. Residues 349 to 468 (NFTGRPITID…YSNLIRTLSS (120 aa)) form a domain IV, binds dsDNA region.

The protein belongs to the DnaA family. In terms of assembly, oligomerizes as a right-handed, spiral filament on DNA at oriC.

The protein localises to the cytoplasm. Functionally, plays an essential role in the initiation and regulation of chromosomal replication. ATP-DnaA binds to the origin of replication (oriC) to initiate formation of the DNA replication initiation complex once per cell cycle. Binds the DnaA box (a 9 base pair repeat at the origin) and separates the double-stranded (ds)DNA. Forms a right-handed helical filament on oriC DNA; dsDNA binds to the exterior of the filament while single-stranded (ss)DNA is stabiized in the filament's interior. The ATP-DnaA-oriC complex binds and stabilizes one strand of the AT-rich DNA unwinding element (DUE), permitting loading of DNA polymerase. After initiation quickly degrades to an ADP-DnaA complex that is not apt for DNA replication. Binds acidic phospholipids. In terms of biological role, complements a temperature-sensitive E.coli mutant, the DnaA consensus is 5'-TT(A/T)TNCACA-3'. In Vibrio harveyi (Beneckea harveyi), this protein is Chromosomal replication initiator protein DnaA.